We begin with the raw amino-acid sequence, 478 residues long: Transposase for insertion sequence element IS231D (478 aa).

The protein belongs to the transposase 11 family.

Functionally, involved in the transposition of the insertion sequence. This chain is Transposase for insertion sequence element IS231D, found in Bacillus thuringiensis subsp. finitimus.